Reading from the N-terminus, the 386-residue chain is Arginine biosynthesis bifunctional protein ArgJ (386 aa).

Residues Thr-148, Lys-170, Thr-181, Glu-261, Asn-381, and Ser-386 each coordinate substrate. Thr-181 acts as the Nucleophile in catalysis.

The protein belongs to the ArgJ family. As to quaternary structure, heterotetramer of two alpha and two beta chains.

The protein localises to the cytoplasm. The enzyme catalyses N(2)-acetyl-L-ornithine + L-glutamate = N-acetyl-L-glutamate + L-ornithine. It catalyses the reaction L-glutamate + acetyl-CoA = N-acetyl-L-glutamate + CoA + H(+). It participates in amino-acid biosynthesis; L-arginine biosynthesis; L-ornithine and N-acetyl-L-glutamate from L-glutamate and N(2)-acetyl-L-ornithine (cyclic): step 1/1. The protein operates within amino-acid biosynthesis; L-arginine biosynthesis; N(2)-acetyl-L-ornithine from L-glutamate: step 1/4. Catalyzes two activities which are involved in the cyclic version of arginine biosynthesis: the synthesis of N-acetylglutamate from glutamate and acetyl-CoA as the acetyl donor, and of ornithine by transacetylation between N(2)-acetylornithine and glutamate. The polypeptide is Arginine biosynthesis bifunctional protein ArgJ (Corynebacterium diphtheriae (strain ATCC 700971 / NCTC 13129 / Biotype gravis)).